Here is a 232-residue protein sequence, read N- to C-terminus: LexA repressor (232 aa).

Positions 35-55 (IREIGDAAGLQSTSSVAYQLK) form a DNA-binding region, H-T-H motif. Positions 61-85 (GFLRRDPNKPRAVDVRHLPETESRS) are enriched in basic and acidic residues. The tract at residues 61–104 (GFLRRDPNKPRAVDVRHLPETESRSSKAATQAKSKAPQAGVHDP) is disordered. The span at 86 to 99 (SKAATQAKSKAPQA) shows a compositional bias: low complexity. Active-site for autocatalytic cleavage activity residues include Ser156 and Lys193.

The protein belongs to the peptidase S24 family. In terms of assembly, homodimer.

It catalyses the reaction Hydrolysis of Ala-|-Gly bond in repressor LexA.. Represses a number of genes involved in the response to DNA damage (SOS response), including recA and lexA. In the presence of single-stranded DNA, RecA interacts with LexA causing an autocatalytic cleavage which disrupts the DNA-binding part of LexA, leading to derepression of the SOS regulon and eventually DNA repair. The chain is LexA repressor from Corynebacterium glutamicum (strain ATCC 13032 / DSM 20300 / JCM 1318 / BCRC 11384 / CCUG 27702 / LMG 3730 / NBRC 12168 / NCIMB 10025 / NRRL B-2784 / 534).